A 342-amino-acid chain; its full sequence is tRNA N6-adenosine threonylcarbamoyltransferase (342 aa).

Residues His-114 and His-118 each coordinate Fe cation. Substrate contacts are provided by residues 136 to 140 (LVSGG), Asp-169, Gly-182, Asp-186, and Asn-275. Position 301 (Asp-301) interacts with Fe cation.

The protein belongs to the KAE1 / TsaD family. It depends on Fe(2+) as a cofactor.

The protein localises to the cytoplasm. It carries out the reaction L-threonylcarbamoyladenylate + adenosine(37) in tRNA = N(6)-L-threonylcarbamoyladenosine(37) in tRNA + AMP + H(+). Required for the formation of a threonylcarbamoyl group on adenosine at position 37 (t(6)A37) in tRNAs that read codons beginning with adenine. Is involved in the transfer of the threonylcarbamoyl moiety of threonylcarbamoyl-AMP (TC-AMP) to the N6 group of A37, together with TsaE and TsaB. TsaD likely plays a direct catalytic role in this reaction. This Streptococcus pyogenes serotype M3 (strain ATCC BAA-595 / MGAS315) protein is tRNA N6-adenosine threonylcarbamoyltransferase.